The chain runs to 341 residues: Protein RecA, plasmid (341 aa).

Position 80-87 (80-87) interacts with ATP; sequence GAESSGKT.

Belongs to the RecA family.

It is found in the cytoplasm. Its function is as follows. Can catalyze the hydrolysis of ATP in the presence of single-stranded DNA, the ATP-dependent uptake of single-stranded DNA by duplex DNA, and the ATP-dependent hybridization of homologous single-stranded DNAs. It interacts with LexA causing its activation and leading to its autocatalytic cleavage. The protein is Protein RecA, plasmid of Lactococcus lactis subsp. lactis (Streptococcus lactis).